The chain runs to 233 residues: Phosphoribosylaminoimidazole-succinocarboxamide synthase (233 aa).

This sequence belongs to the SAICAR synthetase family.

The enzyme catalyses 5-amino-1-(5-phospho-D-ribosyl)imidazole-4-carboxylate + L-aspartate + ATP = (2S)-2-[5-amino-1-(5-phospho-beta-D-ribosyl)imidazole-4-carboxamido]succinate + ADP + phosphate + 2 H(+). The protein operates within purine metabolism; IMP biosynthesis via de novo pathway; 5-amino-1-(5-phospho-D-ribosyl)imidazole-4-carboxamide from 5-amino-1-(5-phospho-D-ribosyl)imidazole-4-carboxylate: step 1/2. This is Phosphoribosylaminoimidazole-succinocarboxamide synthase from Staphylococcus saprophyticus subsp. saprophyticus (strain ATCC 15305 / DSM 20229 / NCIMB 8711 / NCTC 7292 / S-41).